Here is a 571-residue protein sequence, read N- to C-terminus: Polypeptide N-acetylgalactosaminyltransferase 2 (571 aa).

Topologically, residues 1–6 (MRRRSR) are cytoplasmic. Residues 7 to 24 (MLLCFAFLWVLGIAYYMY) traverse the membrane as a helical; Signal-anchor for type II membrane protein segment. Residues 25 to 571 (SGGGSALAGG…QWKFTLNLQQ (547 aa)) are Lumenal-facing. O-linked (Xyl...) (chondroitin sulfate) serine glycosylation occurs at S29. Residues 53–66 (KKDLHHSNGEEKAQ) are compositionally biased toward basic and acidic residues. The disordered stretch occupies residues 53-74 (KKDLHHSNGEEKAQSMETLPPG). 4 disulfide bridges follow: C126–C354, C345–C423, C456–C473, and C496–C513. The segment at 135 to 240 (LPATSVVITF…EHWLEPLLER (106 aa)) is catalytic subdomain A. Substrate-binding residues include T143, D176, and R201. Residue D224 participates in Mn(2+) binding. S225 is a binding site for substrate. H226 is a Mn(2+) binding site. The catalytic subdomain B stretch occupies residues 300–362 (PIKTPMIAGG…PCSRVGHVFR (63 aa)). A substrate-binding site is contributed by W331. H359 contributes to the Mn(2+) binding site. Substrate-binding residues include R362, H365, and Y367. One can recognise a Ricin B-type lectin domain in the interval 443-566 (QDIAFGALQQ…PALSQQWKFT (124 aa)). S536 is modified (phosphoserine). Residues C539 and C555 are joined by a disulfide bond.

The protein belongs to the glycosyltransferase 2 family. GalNAc-T subfamily. Requires Mn(2+) as cofactor. As to expression, detected in urine (at protein level). Widely expressed.

The protein localises to the golgi apparatus. It is found in the golgi stack membrane. Its subcellular location is the secreted. The catalysed reaction is L-seryl-[protein] + UDP-N-acetyl-alpha-D-galactosamine = a 3-O-[N-acetyl-alpha-D-galactosaminyl]-L-seryl-[protein] + UDP + H(+). It catalyses the reaction L-threonyl-[protein] + UDP-N-acetyl-alpha-D-galactosamine = a 3-O-[N-acetyl-alpha-D-galactosaminyl]-L-threonyl-[protein] + UDP + H(+). Its pathway is protein modification; protein glycosylation. Functionally, catalyzes the initial reaction in O-linked oligosaccharide biosynthesis, the transfer of an N-acetyl-D-galactosamine residue to a serine or threonine residue on the protein receptor. Has a broad spectrum of substrates for peptides such as EA2, Muc5AC, Muc1a, Muc1b. Probably involved in O-linked glycosylation of the immunoglobulin A1 (IgA1) hinge region. Involved in O-linked glycosylation of APOC-III, ANGPTL3 and PLTP. It participates in the regulation of HDL-C metabolism. The polypeptide is Polypeptide N-acetylgalactosaminyltransferase 2 (GALNT2) (Homo sapiens (Human)).